A 447-amino-acid polypeptide reads, in one-letter code: tRNA-2-methylthio-N(6)-dimethylallyladenosine synthase (447 aa).

The MTTase N-terminal domain occupies 3–120; that stretch reads KKLYIETHGC…LPEMIDAART (118 aa). [4Fe-4S] cluster is bound by residues C12, C49, C83, C157, C161, and C164. The 233-residue stretch at 143 to 375 folds into the Radical SAM core domain; the sequence is RVDGPSAFVS…QHRINQYGFE (233 aa). One can recognise a TRAM domain in the interval 378–442; it reads RRMVGTVQRI…PHSLRGTLLD (65 aa).

The protein belongs to the methylthiotransferase family. MiaB subfamily. As to quaternary structure, monomer. [4Fe-4S] cluster serves as cofactor.

It localises to the cytoplasm. The enzyme catalyses N(6)-dimethylallyladenosine(37) in tRNA + (sulfur carrier)-SH + AH2 + 2 S-adenosyl-L-methionine = 2-methylsulfanyl-N(6)-dimethylallyladenosine(37) in tRNA + (sulfur carrier)-H + 5'-deoxyadenosine + L-methionine + A + S-adenosyl-L-homocysteine + 2 H(+). Its function is as follows. Catalyzes the methylthiolation of N6-(dimethylallyl)adenosine (i(6)A), leading to the formation of 2-methylthio-N6-(dimethylallyl)adenosine (ms(2)i(6)A) at position 37 in tRNAs that read codons beginning with uridine. The polypeptide is tRNA-2-methylthio-N(6)-dimethylallyladenosine synthase (Ectopseudomonas mendocina (strain ymp) (Pseudomonas mendocina)).